Reading from the N-terminus, the 314-residue chain is Homoserine O-succinyltransferase (314 aa).

The Acyl-thioester intermediate role is filled by C142. Substrate contacts are provided by K163 and S192. H235 serves as the catalytic Proton acceptor. The active site involves E237. Position 249 (R249) interacts with substrate.

The protein belongs to the MetA family.

It localises to the cytoplasm. It carries out the reaction L-homoserine + succinyl-CoA = O-succinyl-L-homoserine + CoA. It functions in the pathway amino-acid biosynthesis; L-methionine biosynthesis via de novo pathway; O-succinyl-L-homoserine from L-homoserine: step 1/1. Functionally, transfers a succinyl group from succinyl-CoA to L-homoserine, forming succinyl-L-homoserine. The sequence is that of Homoserine O-succinyltransferase from Photobacterium profundum (strain SS9).